The primary structure comprises 123 residues: Large ribosomal subunit protein bL17 (123 aa).

The protein belongs to the bacterial ribosomal protein bL17 family. Part of the 50S ribosomal subunit. Contacts protein L32.

The sequence is that of Large ribosomal subunit protein bL17 from Borreliella burgdorferi (strain ATCC 35210 / DSM 4680 / CIP 102532 / B31) (Borrelia burgdorferi).